The sequence spans 637 residues: Chaperone protein HtpG (637 aa).

The segment at 1-345 is a; substrate-binding; sequence MSQQETHGFQ…SNDLPLNVSR (345 aa). Residues 346–562 are b; the sequence is EILQDNQVTT…EGEMSTQMIK (217 aa). Residues 563–637 form a c region; that stretch reads LMQAAGQPVP…TNQMLLASVK (75 aa).

The protein belongs to the heat shock protein 90 family. In terms of assembly, homodimer.

It is found in the cytoplasm. Its function is as follows. Molecular chaperone. Has ATPase activity. This Shewanella frigidimarina (strain NCIMB 400) protein is Chaperone protein HtpG.